The sequence spans 470 residues: Ribulose bisphosphate carboxylase large chain (470 aa).

2 residues coordinate substrate: N115 and T165. The active-site Proton acceptor is the K167. K169 is a binding site for substrate. K193, D195, and E196 together coordinate Mg(2+). Residue K193 is modified to N6-carboxylysine. H286 functions as the Proton acceptor in the catalytic mechanism. Residues R287, H319, and S371 each contribute to the substrate site.

It belongs to the RuBisCO large chain family. Type I subfamily. Heterohexadecamer of 8 large chains and 8 small chains. Mg(2+) serves as cofactor.

The protein localises to the carboxysome. The catalysed reaction is 2 (2R)-3-phosphoglycerate + 2 H(+) = D-ribulose 1,5-bisphosphate + CO2 + H2O. The enzyme catalyses D-ribulose 1,5-bisphosphate + O2 = 2-phosphoglycolate + (2R)-3-phosphoglycerate + 2 H(+). Its function is as follows. RuBisCO catalyzes two reactions: the carboxylation of D-ribulose 1,5-bisphosphate, the primary event in carbon dioxide fixation, as well as the oxidative fragmentation of the pentose substrate in the photorespiration process. Both reactions occur simultaneously and in competition at the same active site. The sequence is that of Ribulose bisphosphate carboxylase large chain from Synechococcus sp. (strain CC9902).